Reading from the N-terminus, the 976-residue chain is LRR receptor-like serine/threonine-protein kinase ERECTA (976 aa).

The N-terminal stretch at 1 to 24 (MALFRDIVLLGFLFCLSLVATVTS) is a signal peptide. The Extracellular segment spans residues 25 to 580 (EEGATLLEIK…RRTVRVSISR (556 aa)). N-linked (GlcNAc...) asparagine glycans are attached at residues Asn-65 and Asn-74. LRR repeat units follow at residues 69–92 (NVVA…GDLK), 93–115 (SLLS…IGDC), 117–140 (SLQN…SKLK), 141–163 (QLEQ…LSQI), 165–187 (NLKI…IYWN), 189–212 (VLQY…CQLT), 213–235 (GLWY…IGNC), 237–259 (AFQV…IGFL), 260–282 (QVAT…IGLM), 284–306 (ALAV…LGNL), 308–330 (FTEK…LGNM), 332–355 (KLHY…GKLT), 356–379 (DLFD…SSCT), 380–401 (NLNS…AFQK), 404–425 (SMTY…ELSR), 428–449 (NLDT…SLGD), 452–473 (HLLK…DFGN), 476–498 (SIME…LNQL), 500–522 (NIIL…ANCL), and 523–545 (SLTV…NNFS). N-linked (GlcNAc...) asparagine glycosylation is found at Asn-221 and Asn-234. N-linked (GlcNAc...) asparagine glycans are attached at residues Asn-305 and Asn-329. A glycan (N-linked (GlcNAc...) asparagine) is linked at Asn-409. The N-linked (GlcNAc...) asparagine glycan is linked to Asn-457. Asn-510, Asn-528, and Asn-543 each carry an N-linked (GlcNAc...) asparagine glycan. Residues 581–601 (AAILGIAIGGLVILLMVLIAA) traverse the membrane as a helical segment. Residues 602–976 (CRPHNPPPFL…FGQVISQNSE (375 aa)) are Cytoplasmic-facing. Thr-645 carries the phosphothreonine modification. One can recognise a Protein kinase domain in the interval 648–918 (LSEKYIIGHG…QVTRVLGSFM (271 aa)). Residues 654 to 662 (IGHGASSTV) and Lys-676 each bind ATP. Phosphotyrosine is present on residues Tyr-721 and Tyr-760. Asp-773 (proton acceptor) is an active-site residue. The residue at position 815 (Tyr-815) is a Phosphotyrosine. A Phosphothreonine modification is found at Thr-823.

It belongs to the protein kinase superfamily. Ser/Thr protein kinase family. As to quaternary structure, homodimer and heterodimer with ERL1 and TMM. Interacts with EPF1, EPF2, EPFL4, EPFL5 and EPFL6. Interacts with SERK1, SERK2, SERK3/BAK1 and SERK4 in a EPF2-induced manner. Interacts with EPFL9/STOMAGEN. Mostly expressed in shoot apical meristems (SAM), organ primordia, flowers, siliques and young rosette leaves, and, to a lower extent, in stems and cauline leaves. Expressed in growing inflorescence stems and pedicels. Detected in epidermis, phloem and xylem.

It is found in the cell membrane. It carries out the reaction L-seryl-[protein] + ATP = O-phospho-L-seryl-[protein] + ADP + H(+). The catalysed reaction is L-threonyl-[protein] + ATP = O-phospho-L-threonyl-[protein] + ADP + H(+). Its function is as follows. Receptor kinase that, together with ERL1 and ERL2, regulates aerial architecture, including inflorescence (e.g. shoot apical meristem-originating organ shape, elongation of the internode and pedicels, and adaxial-abaxial polarity), and stomatal patterning (e.g. density and clustering), probably by tuning cell division and expansion. Redundantly involved with ERL1 in procambial development regulation. Forms a functional ligand-receptor pair with EPF2 (AC Q8LC53). Modulates plant transpiration efficiency by controlling stomatal density, leaf photosynthetic capacity, epidermal cell expansion, mesophyll cell proliferation and cell-cell contact. A phloem-specific expression of ER is sufficient for proper inflorescence architecture. Probable major trait regulating canalization (maintenance of phenotype despite varying environment) in many aspect of the plant physiology (e.g. plant morphology, light-dependent leaves number, branch number, flowering time, phytate and mineral concentrations) by transducing microenvironmental variation into phenotypic differentiation (ecological amplifier). May maintain development integrity in heat stress conditions. Regulates cell wall composition and structure. Confers resistance to the pathogenic bacteria Ralstonia solanacearum and to the necrotrophic fungi Plectosphaerella cucumerina and Pythium irregulare, and required for callose deposition upon infection. Resistance to P.cucumerina seems cell wall-mediated. Forms a constitutive complex with TMM involved in the recognition of the stomatal regulatory peptides EPF1, EPF2 and EPFL9/STOMAGEN. This chain is LRR receptor-like serine/threonine-protein kinase ERECTA, found in Arabidopsis thaliana (Mouse-ear cress).